The chain runs to 341 residues: Anthranilate phosphoribosyltransferase (341 aa).

Residues Gly80, 83–84 (GD), Thr88, 90–93 (NIST), 108–116 (KHGNRAMSS), and Ser120 each bind 5-phospho-alpha-D-ribose 1-diphosphate. Gly80 contributes to the anthranilate binding site. Ser92 contacts Mg(2+). Asn111 contacts anthranilate. Anthranilate is bound at residue Arg166. Mg(2+) contacts are provided by Asp225 and Glu226.

This sequence belongs to the anthranilate phosphoribosyltransferase family. Homodimer. Mg(2+) serves as cofactor.

It carries out the reaction N-(5-phospho-beta-D-ribosyl)anthranilate + diphosphate = 5-phospho-alpha-D-ribose 1-diphosphate + anthranilate. It functions in the pathway amino-acid biosynthesis; L-tryptophan biosynthesis; L-tryptophan from chorismate: step 2/5. In terms of biological role, catalyzes the transfer of the phosphoribosyl group of 5-phosphorylribose-1-pyrophosphate (PRPP) to anthranilate to yield N-(5'-phosphoribosyl)-anthranilate (PRA). In Roseiflexus sp. (strain RS-1), this protein is Anthranilate phosphoribosyltransferase.